A 549-amino-acid chain; its full sequence is Glutamyl-tRNA(Gln) amidotransferase subunit B, mitochondrial (549 aa).

The N-terminal 23 residues, 1-23 (MLRISRDTKIVARVTHVTKSRTY), are a transit peptide targeting the mitochondrion.

It belongs to the GatB/GatE family. GatB subfamily. In terms of assembly, subunit of the heterotrimeric GatFAB amidotransferase (AdT) complex, composed of A, B and F subunits.

The protein localises to the mitochondrion. The enzyme catalyses L-glutamyl-tRNA(Gln) + L-glutamine + ATP + H2O = L-glutaminyl-tRNA(Gln) + L-glutamate + ADP + phosphate + H(+). Allows the formation of correctly charged Gln-tRNA(Gln) through the transamidation of misacylated Glu-tRNA(Gln) in the mitochondria. The reaction takes place in the presence of glutamine and ATP through an activated gamma-phospho-Glu-tRNA(Gln). The polypeptide is Glutamyl-tRNA(Gln) amidotransferase subunit B, mitochondrial (Yarrowia lipolytica (strain CLIB 122 / E 150) (Yeast)).